Reading from the N-terminus, the 220-residue chain is Thiamine-phosphate synthase (220 aa).

4-amino-2-methyl-5-(diphosphooxymethyl)pyrimidine-binding positions include 47–51 (QYREK) and Asn-78. Residues Asp-79 and Asp-98 each contribute to the Mg(2+) site. Position 117 (Ser-117) interacts with 4-amino-2-methyl-5-(diphosphooxymethyl)pyrimidine. 143-145 (TAT) is a 2-[(2R,5Z)-2-carboxy-4-methylthiazol-5(2H)-ylidene]ethyl phosphate binding site. Lys-146 provides a ligand contact to 4-amino-2-methyl-5-(diphosphooxymethyl)pyrimidine. Residues Gly-174 and 194 to 195 (IS) each bind 2-[(2R,5Z)-2-carboxy-4-methylthiazol-5(2H)-ylidene]ethyl phosphate.

The protein belongs to the thiamine-phosphate synthase family. Mg(2+) is required as a cofactor.

It carries out the reaction 2-[(2R,5Z)-2-carboxy-4-methylthiazol-5(2H)-ylidene]ethyl phosphate + 4-amino-2-methyl-5-(diphosphooxymethyl)pyrimidine + 2 H(+) = thiamine phosphate + CO2 + diphosphate. The enzyme catalyses 2-(2-carboxy-4-methylthiazol-5-yl)ethyl phosphate + 4-amino-2-methyl-5-(diphosphooxymethyl)pyrimidine + 2 H(+) = thiamine phosphate + CO2 + diphosphate. The catalysed reaction is 4-methyl-5-(2-phosphooxyethyl)-thiazole + 4-amino-2-methyl-5-(diphosphooxymethyl)pyrimidine + H(+) = thiamine phosphate + diphosphate. Its pathway is cofactor biosynthesis; thiamine diphosphate biosynthesis; thiamine phosphate from 4-amino-2-methyl-5-diphosphomethylpyrimidine and 4-methyl-5-(2-phosphoethyl)-thiazole: step 1/1. Condenses 4-methyl-5-(beta-hydroxyethyl)thiazole monophosphate (THZ-P) and 2-methyl-4-amino-5-hydroxymethyl pyrimidine pyrophosphate (HMP-PP) to form thiamine monophosphate (TMP). The sequence is that of Thiamine-phosphate synthase from Methanosarcina barkeri (strain Fusaro / DSM 804).